Here is a 143-residue protein sequence, read N- to C-terminus: Hemoglobin cathodic subunit alpha (143 aa).

Serine 1 carries the post-translational modification N-acetylserine. A Globin domain is found at 1–143 (SLAPGDKTVV…VCAALSDKYR (143 aa)). Residue histidine 59 participates in O2 binding. Position 89 (histidine 89) interacts with heme b.

This sequence belongs to the globin family. As to quaternary structure, heterotetramer of two alpha chains and two beta chains. As to expression, red blood cells.

Involved in oxygen transport from gills to the various peripheral tissues. This Gymnothorax unicolor (Brown moray) protein is Hemoglobin cathodic subunit alpha.